The chain runs to 333 residues: Anthranilate phosphoribosyltransferase (333 aa).

Residues G81, 84 to 85 (GD), T89, 91 to 94 (NIST), 109 to 117 (KHGNRSVSS), and A121 contribute to the 5-phospho-alpha-D-ribose 1-diphosphate site. G81 provides a ligand contact to anthranilate. S93 lines the Mg(2+) pocket. An anthranilate-binding site is contributed by N112. Residue R167 participates in anthranilate binding. 2 residues coordinate Mg(2+): D225 and E226.

This sequence belongs to the anthranilate phosphoribosyltransferase family. As to quaternary structure, homodimer. Requires Mg(2+) as cofactor.

The catalysed reaction is N-(5-phospho-beta-D-ribosyl)anthranilate + diphosphate = 5-phospho-alpha-D-ribose 1-diphosphate + anthranilate. It functions in the pathway amino-acid biosynthesis; L-tryptophan biosynthesis; L-tryptophan from chorismate: step 2/5. Catalyzes the transfer of the phosphoribosyl group of 5-phosphorylribose-1-pyrophosphate (PRPP) to anthranilate to yield N-(5'-phosphoribosyl)-anthranilate (PRA). The protein is Anthranilate phosphoribosyltransferase of Actinobacillus succinogenes (strain ATCC 55618 / DSM 22257 / CCUG 43843 / 130Z).